The chain runs to 700 residues: Neoverrucotoxin subunit beta (700 aa).

The B30.2/SPRY domain maps to 506–700 (HMPGVETIKD…QKVNGQIKLL (195 aa)).

This sequence belongs to the SNTX/VTX toxin family. In terms of assembly, heterodimer of alpha and beta subunits. In terms of processing, not glycosylated. Post-translationally, four intrachain disulfide linkages are present in the heterodimer. No interchain disulfide bound links the two subunits. In terms of tissue distribution, expressed by the venom gland.

It is found in the secreted. Has hemolytic and lethal activities. Its hemolytic activity is inhibited by anionic lipids, especially potently by cardiolipin. The protein is Neoverrucotoxin subunit beta of Synanceia verrucosa (Reef stonefish).